We begin with the raw amino-acid sequence, 247 residues long: Vacuolar iron transporter 1 (247 aa).

Over 1-33 the chain is Cytoplasmic; the sequence is MVIAGVSPPTPSSENLLQEHEEKHFTATDVVRD. Residues 34–54 traverse the membrane as a helical segment; sequence VIIGVSDGLTVPFALAAGLSG. Topologically, residues 55 to 60 are vacuolar; the sequence is ANVPSS. Residues 61 to 81 traverse the membrane as a helical segment; it reads LILTAGIAEVAAGAISMGLGG. Over 82-167 the chain is Cytoplasmic; the sequence is YLAAKSEEDH…PRRALESAMT (86 aa). Fe cation contacts are provided by glutamate 99, glutamate 102, glutamate 110, glutamate 113, methionine 146, and glutamate 150. Residues 168–188 form a helical membrane-spanning segment; the sequence is IALAYVVGGLVPLSPYFFIPF. The Vacuolar segment spans residues 189–191; the sequence is AKQ. The helical transmembrane segment at 192 to 212 threads the bilayer; that stretch reads AMITSIAVTLLALVVFGYIKG. At 213 to 219 the chain is on the cytoplasmic side; sequence RFTGSNP. Residues 220 to 240 traverse the membrane as a helical segment; it reads VLSSIQTAIIGALASAAAYAM. At 241–247 the chain is on the vacuolar side; the sequence is AKAVQSV.

The protein belongs to the CCC1 family. In terms of tissue distribution, expressed at high levels in the blue epidermal cells of the inner bottom part of the petal (at protein level). No detectable expression in parenchyma and epidermis of the purple segments of the petal, parenchyma of the blue segments, leaf, stem, bulb and root (at protein level). High levels of mRNA in the blue epidermal cells of the inner bottom part of the petal. Low-levels of mRNA in the purple segments of the petal, stem, leaf, root, bulb and pistil.

Its subcellular location is the vacuole membrane. The enzyme catalyses Fe(2+)(in) = Fe(2+)(out). Functionally, vacuolar iron transporter involved in the transfer of iron ions from the cytosol to the vacuole for intracellular iron storage. Plays an essential role in the development of blue coloration in tulip petals most likely due to the accumulation of ferrous ions that can form complexes with anthocyanins. In Tulipa gesneriana (Garden tulip), this protein is Vacuolar iron transporter 1.